Here is a 190-residue protein sequence, read N- to C-terminus: Segregation and condensation protein B (190 aa).

It belongs to the ScpB family. Homodimer. Homodimerization may be required to stabilize the binding of ScpA to the Smc head domains. Component of a cohesin-like complex composed of ScpA, ScpB and the Smc homodimer, in which ScpA and ScpB bind to the head domain of Smc. The presence of the three proteins is required for the association of the complex with DNA.

It localises to the cytoplasm. Participates in chromosomal partition during cell division. May act via the formation of a condensin-like complex containing Smc and ScpA that pull DNA away from mid-cell into both cell halves. The chain is Segregation and condensation protein B from Bacillus cereus (strain ZK / E33L).